The sequence spans 326 residues: Holliday junction branch migration complex subunit RuvB (326 aa).

The interval 1-180 (MRSISCSKEY…FGIPLRLEFY (180 aa)) is large ATPase domain (RuvB-L). Residues isoleucine 19, arginine 20, glycine 61, lysine 64, threonine 65, threonine 66, 127–129 (EDF), arginine 170, tyrosine 180, and arginine 217 contribute to the ATP site. A Mg(2+)-binding site is contributed by threonine 65. Positions 181-251 (SFEELVDIIK…IADSALSKLG (71 aa)) are small ATPAse domain (RuvB-S). The head domain (RuvB-H) stretch occupies residues 254–326 (KMGLNKLDVD…QGKEYLSLQY (73 aa)). 2 residues coordinate DNA: arginine 307 and arginine 312.

The protein belongs to the RuvB family. As to quaternary structure, homohexamer. Forms an RuvA(8)-RuvB(12)-Holliday junction (HJ) complex. HJ DNA is sandwiched between 2 RuvA tetramers; dsDNA enters through RuvA and exits via RuvB. An RuvB hexamer assembles on each DNA strand where it exits the tetramer. Each RuvB hexamer is contacted by two RuvA subunits (via domain III) on 2 adjacent RuvB subunits; this complex drives branch migration. In the full resolvosome a probable DNA-RuvA(4)-RuvB(12)-RuvC(2) complex forms which resolves the HJ.

The protein localises to the cytoplasm. It catalyses the reaction ATP + H2O = ADP + phosphate + H(+). Functionally, the RuvA-RuvB-RuvC complex processes Holliday junction (HJ) DNA during genetic recombination and DNA repair, while the RuvA-RuvB complex plays an important role in the rescue of blocked DNA replication forks via replication fork reversal (RFR). RuvA specifically binds to HJ cruciform DNA, conferring on it an open structure. The RuvB hexamer acts as an ATP-dependent pump, pulling dsDNA into and through the RuvAB complex. RuvB forms 2 homohexamers on either side of HJ DNA bound by 1 or 2 RuvA tetramers; 4 subunits per hexamer contact DNA at a time. Coordinated motions by a converter formed by DNA-disengaged RuvB subunits stimulates ATP hydrolysis and nucleotide exchange. Immobilization of the converter enables RuvB to convert the ATP-contained energy into a lever motion, pulling 2 nucleotides of DNA out of the RuvA tetramer per ATP hydrolyzed, thus driving DNA branch migration. The RuvB motors rotate together with the DNA substrate, which together with the progressing nucleotide cycle form the mechanistic basis for DNA recombination by continuous HJ branch migration. Branch migration allows RuvC to scan DNA until it finds its consensus sequence, where it cleaves and resolves cruciform DNA. The protein is Holliday junction branch migration complex subunit RuvB of Wolbachia sp. subsp. Brugia malayi (strain TRS).